The following is a 339-amino-acid chain: Uricase (339 aa).

Active-site charge relay system residues include Lys-33 and Thr-78. 7 residues coordinate urate: Thr-78, Asp-79, Phe-201, Arg-218, Val-266, Gln-267, and Asn-293. The active-site Charge relay system is His-295. A Microbody targeting signal motif is present at residues 337-339 (SHL).

This sequence belongs to the uricase family.

It is found in the peroxisome. It carries out the reaction urate + O2 + H2O = 5-hydroxyisourate + H2O2. The protein operates within purine metabolism; urate degradation; (S)-allantoin from urate: step 1/3. Catalyzes the oxidation of uric acid to 5-hydroxyisourate, which is further processed to form (S)-allantoin. The protein is Uricase (Uro) of Drosophila subobscura (Fruit fly).